We begin with the raw amino-acid sequence, 300 residues long: GTPase Era (300 aa).

The 170-residue stretch at K4–K173 folds into the Era-type G domain. The segment at G12–S19 is G1. G12 to S19 serves as a coordination point for GTP. Positions Q38–N42 are G2. The tract at residues D59 to G62 is G3. Residues D59–F63 and S122–E125 each bind GTP. Residues S122–E125 are G4. The segment at I152 to A154 is G5. One can recognise a KH type-2 domain in the interval L204 to N282.

This sequence belongs to the TRAFAC class TrmE-Era-EngA-EngB-Septin-like GTPase superfamily. Era GTPase family. As to quaternary structure, monomer.

The protein resides in the cytoplasm. It is found in the cell membrane. In terms of biological role, an essential GTPase that binds both GDP and GTP, with rapid nucleotide exchange. Plays a role in 16S rRNA processing and 30S ribosomal subunit biogenesis and possibly also in cell cycle regulation and energy metabolism. In Ureaplasma parvum serovar 3 (strain ATCC 27815 / 27 / NCTC 11736), this protein is GTPase Era.